The chain runs to 300 residues: Cation-efflux pump FieF (300 aa).

4 helical membrane passes run 12–32 (AAIA…FAWW), 39–59 (ILAA…NLLV), 82–102 (AALA…LTGI), and 114–134 (PGVG…LVSF). Zn(2+)-binding residues include aspartate 45 and aspartate 49. 2 residues coordinate Zn(2+): histidine 153 and aspartate 157. Helical transmembrane passes span 156–176 (SDVM…YGWH) and 178–198 (ADAL…LRMG).

The protein belongs to the cation diffusion facilitator (CDF) transporter (TC 2.A.4) family. FieF subfamily. Homodimer.

It localises to the cell inner membrane. It carries out the reaction Zn(2+)(in) + H(+)(out) = Zn(2+)(out) + H(+)(in). It catalyses the reaction Cd(2+)(in) + H(+)(out) = Cd(2+)(out) + H(+)(in). The enzyme catalyses Fe(2+)(in) + H(+)(out) = Fe(2+)(out) + H(+)(in). Its function is as follows. Divalent metal cation transporter which exports Zn(2+), Cd(2+) and possibly Fe(2+). May be involved in zinc and iron detoxification by efflux. This Shigella flexneri serotype 5b (strain 8401) protein is Cation-efflux pump FieF.